The sequence spans 83 residues: MELNLFKSDHSSSDDESSKPCCDLCMCTASMPPQCHCADIRLNSCHSACDRCACTRSMPGQCRCLDTTDFCYKPCKSSDEDDD.

Residues 1–7 (MELNLFK) constitute a propeptide that is removed on maturation. Disulfide bonds link C21-C75, C22-C37, C25-C71, C27-C35, C45-C52, C49-C64, and C54-C62.

This sequence belongs to the Bowman-Birk serine protease inhibitor family.

This chain is Bowman-Birk type proteinase inhibitor C-II, found in Glycine max (Soybean).